Here is a 502-residue protein sequence, read N- to C-terminus: Probable cytochrome P450 6a23 (502 aa).

A heme-binding site is contributed by cysteine 445.

The protein belongs to the cytochrome P450 family. Requires heme as cofactor.

Its subcellular location is the endoplasmic reticulum membrane. The protein localises to the microsome membrane. Functionally, may be involved in the metabolism of insect hormones and in the breakdown of synthetic insecticides. This is Probable cytochrome P450 6a23 (Cyp6a23) from Drosophila melanogaster (Fruit fly).